We begin with the raw amino-acid sequence, 273 residues long: 4-hydroxy-tetrahydrodipicolinate reductase (273 aa).

Residue 12-17 (GANGRM) coordinates NAD(+). Arg39 is a binding site for NADP(+). Residues 102–104 (GTT) and 126–129 (AANF) contribute to the NAD(+) site. Catalysis depends on His159, which acts as the Proton donor/acceptor. Residue His160 coordinates (S)-2,3,4,5-tetrahydrodipicolinate. Lys163 acts as the Proton donor in catalysis. Position 169–170 (169–170 (GT)) interacts with (S)-2,3,4,5-tetrahydrodipicolinate.

This sequence belongs to the DapB family. As to quaternary structure, homotetramer.

The protein localises to the cytoplasm. The enzyme catalyses (S)-2,3,4,5-tetrahydrodipicolinate + NAD(+) + H2O = (2S,4S)-4-hydroxy-2,3,4,5-tetrahydrodipicolinate + NADH + H(+). The catalysed reaction is (S)-2,3,4,5-tetrahydrodipicolinate + NADP(+) + H2O = (2S,4S)-4-hydroxy-2,3,4,5-tetrahydrodipicolinate + NADPH + H(+). The protein operates within amino-acid biosynthesis; L-lysine biosynthesis via DAP pathway; (S)-tetrahydrodipicolinate from L-aspartate: step 4/4. Functionally, catalyzes the conversion of 4-hydroxy-tetrahydrodipicolinate (HTPA) to tetrahydrodipicolinate. The polypeptide is 4-hydroxy-tetrahydrodipicolinate reductase (Cronobacter sakazakii (strain ATCC BAA-894) (Enterobacter sakazakii)).